The primary structure comprises 498 residues: Zinc finger protein 395 (498 aa).

The disordered stretch occupies residues 129–165; it reads QKPLSSPIEQSLPTSPGATSTSAQRSVSRSIDVPKRR. Polar residues predominate over residues 130 to 157; sequence KPLSSPIEQSLPTSPGATSTSAQRSVSR. The Nuclear export signal signature appears at 171–180; sequence MDEMMAAMVL. Residues 209 to 245 form a disordered region; it reads KEGGDVSDSGSSTTSGHWSASSGVSTPSPPHTDASPK. Low complexity predominate over residues 214–231; it reads VSDSGSSTTSGHWSASSG. The C2H2-type zinc finger occupies 285 to 310; sequence YKCLWPNCGKLLRSIVGIKRHVKTQH.

Its subcellular location is the cytoplasm. It localises to the nucleus. This Xenopus laevis (African clawed frog) protein is Zinc finger protein 395 (znf395).